The primary structure comprises 237 residues: CDP-diacylglycerol--inositol 3-phosphatidyltransferase (237 aa).

Residues Met1–Tyr12 lie on the Cytoplasmic side of the membrane. Residues Phe13–Phe33 traverse the membrane as a helical segment. Residues Met34 to Cys41 lie on the Lumenal side of the membrane. Residues Thr42–Leu62 form a helical membrane-spanning segment. The Mg(2+) site is built by Asp52 and Asp55. The a CDP-1,2-diacyl-sn-glycerol site is built by Gly56, Arg60, and Thr66. Topologically, residues His63–Ile71 are cytoplasmic. A helical membrane pass occupies residues Leu72–Tyr92. The Mg(2+) site is built by Asp73 and Asp77. Asp77 acts as the Proton acceptor in catalysis. Over Pro93 to Lys94 the chain is Lumenal. A helical transmembrane segment spans residues Tyr95–Tyr115. Topologically, residues Ser116–Lys144 are cytoplasmic. Residues Val145–Phe165 traverse the membrane as a helical segment. The Lumenal segment spans residues Thr166–Thr185. A helical transmembrane segment spans residues Gly186–Ala206. At Lys207–Gln237 the chain is on the cytoplasmic side.

Belongs to the CDP-alcohol phosphatidyltransferase class-I family. Mn(2+) is required as a cofactor. Mg(2+) serves as cofactor.

The protein resides in the microsome membrane. The protein localises to the endoplasmic reticulum membrane. It is found in the golgi apparatus membrane. Its subcellular location is the mitochondrion outer membrane. The catalysed reaction is a CDP-1,2-diacyl-sn-glycerol + myo-inositol = a 1,2-diacyl-sn-glycero-3-phospho-(1D-myo-inositol) + CMP + H(+). Functionally, catalyzes the synthesis of phosphatidylinositol (PtdIns). This Schizosaccharomyces pombe (strain 972 / ATCC 24843) (Fission yeast) protein is CDP-diacylglycerol--inositol 3-phosphatidyltransferase (pis1).